Here is a 113-residue protein sequence, read N- to C-terminus: Nucleoid-associated protein Synpcc7942_0464 (113 aa).

Belongs to the YbaB/EbfC family. In terms of assembly, homodimer.

The protein localises to the cytoplasm. Its subcellular location is the nucleoid. In terms of biological role, binds to DNA and alters its conformation. May be involved in regulation of gene expression, nucleoid organization and DNA protection. This chain is Nucleoid-associated protein Synpcc7942_0464, found in Synechococcus elongatus (strain ATCC 33912 / PCC 7942 / FACHB-805) (Anacystis nidulans R2).